Here is a 367-residue protein sequence, read N- to C-terminus: Molybdopterin synthase catalytic subunit (367 aa).

Substrate-binding positions include 101–102, lysine 117, and 124–126; these read HR and KKE. The tract at residues 325 to 350 is disordered; that stretch reads RHFTKREPSSMEAAPPKKSRKKSYSA.

The protein belongs to the MoaE family. MOCS2B subfamily. Heterotetramer; composed of 2 small (Mocs2A) and 2 large (Mocs2B) subunits. Component of the Ada2a-containing (ATAC) complex composed of at least Ada2a, Atac1, Hcf, Ada3, Gcn5, Mocs2B, Charac-14, Atac3, Atac2, NC2beta and wds.

The protein resides in the cytoplasm. It is found in the nucleus. It catalyses the reaction 2 [molybdopterin-synthase sulfur-carrier protein]-C-terminal-Gly-aminoethanethioate + cyclic pyranopterin phosphate + H2O = molybdopterin + 2 [molybdopterin-synthase sulfur-carrier protein]-C-terminal Gly-Gly + 2 H(+). It participates in cofactor biosynthesis; molybdopterin biosynthesis. In terms of biological role, catalytic subunit of the molybdopterin synthase complex, a complex that catalyzes the conversion of precursor Z into molybdopterin. Acts by mediating the incorporation of 2 sulfur atoms from thiocarboxylated Mocs2A into precursor Z to generate a dithiolene group. Involved during biosynthesis of the molybdenum cofactor. The protein is Molybdopterin synthase catalytic subunit of Drosophila melanogaster (Fruit fly).